The following is a 247-amino-acid chain: Protein lin-28 homolog B (247 aa).

The segment at 1–22 is disordered; the sequence is MAEGGASKGEEPEKLPGLAEDE. In terms of domain architecture, CSD spans 27 to 100; sequence HGTGHCKWFN…GLESIRVTGP (74 aa). Phosphoserine occurs at positions 94, 103, and 108. The interval 96 to 124 is disordered; that stretch reads RVTGPGGSPCLGSERRPKGKTLQKRKPKG. Basic residues predominate over residues 112-123; the sequence is PKGKTLQKRKPK. CCHC-type zinc fingers lie at residues 125–142 and 147–164; these read DRCY…ECSL and KKCH…NCPH. The Zn(2+) site is built by Cys-127, Cys-130, His-135, Cys-140, Cys-149, Cys-152, His-157, and Cys-162. Residues 173–186 show a composition bias toward polar residues; the sequence is SSQGRQEAESQPCS. The interval 173 to 247 is disordered; the sequence is SSQGRQEAES…GPLIQKRKKT (75 aa). A compositionally biased stretch (basic and acidic residues) spans 207-219; sequence VKSEMAEHSDRSP.

Belongs to the lin-28 family.

Its subcellular location is the nucleus. The protein resides in the nucleolus. Functionally, suppressor of microRNA (miRNA) biogenesis, including that of let-7 and possibly of miR107, miR-143 and miR-200c. Binds primary let-7 transcripts (pri-let-7), including pri-let-7g and pri-let-7a-1, and sequester them in the nucleolus, away from the microprocessor complex, hence preventing their processing into mature miRNA. Does not act on pri-miR21. The repression of let-7 expression is required for normal development and contributes to maintain the pluripotent state of embryonic stem cells by preventing let-7-mediated differentiation. When overexpressed, recruits ZCCHC11/TUT4 uridylyltransferase to pre-let-7 transcripts, leading to their terminal uridylation and degradation. This activity might not be relevant in vivo, as LIN28B-mediated inhibition of let-7 miRNA maturation appears to be ZCCHC11-independent. Interaction with target pre-miRNAs occurs via an 5'-GGAG-3' motif in the pre-miRNA terminal loop. Mediates MYC-induced let-7 repression. When overexpressed, may stimulate growth of carcinoma cell lines. The chain is Protein lin-28 homolog B (Lin28b) from Mus musculus (Mouse).